The chain runs to 171 residues: 3-hydroxydecanoyl-[acyl-carrier-protein] dehydratase (171 aa).

Residue H70 is part of the active site.

This sequence belongs to the thioester dehydratase family. FabA subfamily. Homodimer.

The protein localises to the cytoplasm. The enzyme catalyses a (3R)-hydroxyacyl-[ACP] = a (2E)-enoyl-[ACP] + H2O. The catalysed reaction is (3R)-hydroxydecanoyl-[ACP] = (2E)-decenoyl-[ACP] + H2O. It catalyses the reaction (2E)-decenoyl-[ACP] = (3Z)-decenoyl-[ACP]. It functions in the pathway lipid metabolism; fatty acid biosynthesis. Necessary for the introduction of cis unsaturation into fatty acids. Catalyzes the dehydration of (3R)-3-hydroxydecanoyl-ACP to E-(2)-decenoyl-ACP and then its isomerization to Z-(3)-decenoyl-ACP. Can catalyze the dehydratase reaction for beta-hydroxyacyl-ACPs with saturated chain lengths up to 16:0, being most active on intermediate chain length. This Colwellia psychrerythraea (strain 34H / ATCC BAA-681) (Vibrio psychroerythus) protein is 3-hydroxydecanoyl-[acyl-carrier-protein] dehydratase.